The chain runs to 81 residues: Sulfur carrier protein TusA (81 aa).

Residue Cys19 is the Cysteine persulfide intermediate of the active site.

Belongs to the sulfur carrier protein TusA family. Interacts with IscS.

It is found in the cytoplasm. Its pathway is tRNA modification. Functionally, sulfur carrier protein involved in sulfur trafficking in the cell. Part of a sulfur-relay system required for 2-thiolation during synthesis of 2-thiouridine of the modified wobble base 5-methylaminomethyl-2-thiouridine (mnm(5)s(2)U) in tRNA. Interacts with IscS and stimulates its cysteine desulfurase activity. Accepts an activated sulfur from IscS, which is then transferred to TusD, and thus determines the direction of sulfur flow from IscS to 2-thiouridine formation. Also appears to be involved in sulfur transfer for the biosynthesis of molybdopterin. The polypeptide is Sulfur carrier protein TusA (Pectobacterium atrosepticum (strain SCRI 1043 / ATCC BAA-672) (Erwinia carotovora subsp. atroseptica)).